The primary structure comprises 492 residues: Aspartyl/glutamyl-tRNA(Asn/Gln) amidotransferase subunit B (492 aa).

It belongs to the GatB/GatE family. GatB subfamily. Heterotrimer of A, B and C subunits.

It catalyses the reaction L-glutamyl-tRNA(Gln) + L-glutamine + ATP + H2O = L-glutaminyl-tRNA(Gln) + L-glutamate + ADP + phosphate + H(+). It carries out the reaction L-aspartyl-tRNA(Asn) + L-glutamine + ATP + H2O = L-asparaginyl-tRNA(Asn) + L-glutamate + ADP + phosphate + 2 H(+). Functionally, allows the formation of correctly charged Asn-tRNA(Asn) or Gln-tRNA(Gln) through the transamidation of misacylated Asp-tRNA(Asn) or Glu-tRNA(Gln) in organisms which lack either or both of asparaginyl-tRNA or glutaminyl-tRNA synthetases. The reaction takes place in the presence of glutamine and ATP through an activated phospho-Asp-tRNA(Asn) or phospho-Glu-tRNA(Gln). The polypeptide is Aspartyl/glutamyl-tRNA(Asn/Gln) amidotransferase subunit B (Prochlorococcus marinus (strain SARG / CCMP1375 / SS120)).